The primary structure comprises 206 residues: Large ribosomal subunit protein uL4 (206 aa).

A disordered region spans residues 48 to 75; it reads TQSAKTRAEVSGGGIKPWRQKGTGRARQ.

The protein belongs to the universal ribosomal protein uL4 family. As to quaternary structure, part of the 50S ribosomal subunit.

One of the primary rRNA binding proteins, this protein initially binds near the 5'-end of the 23S rRNA. It is important during the early stages of 50S assembly. It makes multiple contacts with different domains of the 23S rRNA in the assembled 50S subunit and ribosome. Its function is as follows. Forms part of the polypeptide exit tunnel. The polypeptide is Large ribosomal subunit protein uL4 (Clostridium botulinum (strain Loch Maree / Type A3)).